A 103-amino-acid polypeptide reads, in one-letter code: Large ribosomal subunit protein eL30 (103 aa).

It belongs to the eukaryotic ribosomal protein eL30 family.

The polypeptide is Large ribosomal subunit protein eL30 (Methanothrix thermoacetophila (strain DSM 6194 / JCM 14653 / NBRC 101360 / PT) (Methanosaeta thermophila)).